The chain runs to 337 residues: UPF0252 protein PH1321 (337 aa).

A helical transmembrane segment spans residues 100–120 (IIGMLFLVFIILPAITSNLWS).

It belongs to the UPF0252 family.

The protein resides in the membrane. The chain is UPF0252 protein PH1321 from Pyrococcus horikoshii (strain ATCC 700860 / DSM 12428 / JCM 9974 / NBRC 100139 / OT-3).